We begin with the raw amino-acid sequence, 183 residues long: MRLLASVLLALFAVSHAEEGARLLASKSLLNRYAVEGRDLTLQYNIYNVGSSAALDVELSDDSFPPEDFGIVSGMLNVKWDRIAPASNVSHTVVLRPLKAGYFNFTSATVTYLAQEDGPVVIGFTSAPGQGGILAQREFDRRFSPHFLDWAAFGVMTLPSIGIPLLLWYSSKRKYDTPKSKKN.

Positions 1–17 are cleaved as a signal peptide; it reads MRLLASVLLALFAVSHA. Over 18–149 the chain is Lumenal; it reads EEGARLLASK…DRRFSPHFLD (132 aa). Residues N88 and N104 are each glycosylated (N-linked (GlcNAc...) asparagine). A helical transmembrane segment spans residues 150 to 169; it reads WAAFGVMTLPSIGIPLLLWY. Over 170–183 the chain is Cytoplasmic; that stretch reads SSKRKYDTPKSKKN.

The protein belongs to the TRAP-beta family. Heterotetramer of TRAP-alpha, TRAP-beta, TRAP-delta and TRAP-gamma. Interacts with STING1.

It localises to the endoplasmic reticulum membrane. In terms of biological role, TRAP proteins are part of a complex whose function is to bind calcium to the ER membrane and thereby regulate the retention of ER resident proteins. The sequence is that of Translocon-associated protein subunit beta (SSR2) from Canis lupus familiaris (Dog).